Reading from the N-terminus, the 153-residue chain is Small ribosomal subunit protein bS16 (153 aa).

The disordered stretch occupies residues Glu-130–Ala-153. Over residues Ala-140–Ala-153 the composition is skewed to acidic residues.

It belongs to the bacterial ribosomal protein bS16 family.

The polypeptide is Small ribosomal subunit protein bS16 (Bifidobacterium longum (strain NCC 2705)).